A 2671-amino-acid chain; its full sequence is Stalled ribosome sensor GCN1 (2671 aa).

The residue at position 2 (alanine 2) is an N-acetylalanine. HEAT repeat units lie at residues 140-178 (NKLV…ENPG), 257-293 (EFKD…LDLS), 294-331 (QYAL…QCSD), 385-423 (CVAE…EVPK), 425-459 (LTDW…GDTL), 460-500 (LQAL…SKLS), 560-597 (SKVQ…SLGG), 599-636 (KLAN…MGKT), 700-732 (AFIT…SLSV), and 733-772 (LSPD…PAGE). At serine 729 the chain carries Phosphoserine. Serine 786 carries the post-translational modification Phosphoserine. The stretch at 804–865 (QIIEMELKEE…EAALGLLDAI (62 aa)) forms a coiled coil. 37 HEAT repeats span residues 879 to 918 (VLVD…TLGT), 979 to 1016 (SLVF…HAQL), 1035 to 1072 (LPRV…SSSG), 1078 to 1115 (FAEQ…VLPS), 1155 to 1192 (DLQS…RYQR), 1210 to 1250 (YRPP…YLDS), 1251 to 1289 (SQVK…AHGK), 1290 to 1332 (ENVN…HLDK), 1335 to 1372 (PKVK…AVKE), 1374 to 1410 (AGGM…GLGI), 1413 to 1451 (LKQQ…MLGK), 1455 to 1492 (PYVV…NLSA), 1493 to 1530 (HGVK…CAPK), 1534 to 1571 (SCLP…VIRN), 1573 to 1609 (EILA…HFID), 1611 to 1648 (PSLA…LTDQ), 1653 to 1690 (PYLP…GMGE), 1692 to 1729 (CFED…GLGV), 1731 to 1769 (KLEK…TFGD), 1773 to 1810 (PYVG…MYAE), 1812 to 1848 (AIAL…HISG), 1921 to 1958 (EILP…KLGE), 1959 to 1996 (KILP…STSR), 2001 to 2038 (FFSE…TIGH), 2039 to 2074 (QALE…VKSR), 2076 to 2108 (VLPY…LTRH), 2111 to 2146 (VILP…VEDD), 2147 to 2184 (TGHR…RSKA), 2188 to 2225 (SHLR…KLDA), 2259 to 2296 (RGVT…LTSA), 2301 to 2338 (PSVV…GKVG), 2339 to 2380 (IALK…IHVK), 2382 to 2417 (DPLF…GAGS), 2422 to 2459 (AIRK…FLTD), 2546 to 2583 (QLPP…EPRP), 2588 to 2625 (QTIK…MRRG), and 2627 to 2661 (ELLQ…QADS). The tract at residues 2260–2408 (GVTSILPVLR…GIRDTMLQAL (149 aa)) is RWDBD region. Phosphoserine is present on serine 2276.

It belongs to the GCN1 family. In terms of assembly, interacts with EIF2AK4/GCN2; this interaction stimulates the EIF2AK4/GCN2 kinase activity and is impaired by IMPACT upon a variety of stress conditions, such as amino acid depletion, UV-C irradiation, proteasome inhibitor treatment and glucose deprivation. Interacts with IMPACT; this prevents the interaction of GCN1 with EIF2AK4/GCN2 and inhibits EIF2AK4/GCN2 kinase activity. Interacts with RNF14; interaction takes place following ribosome stalling and promotes recruitment of RNF14. As to expression, expressed in the hypothalamus, cortex and hippocampus.

It localises to the cytoplasm. In terms of biological role, ribosome collision sensor that plays a key role in the RNF14-RNF25 translation quality control pathway, a pathway that takes place when a ribosome has stalled during translation, and which promotes ubiquitination and degradation of translation factors on stalled ribosomes. Directly binds to the ribosome and acts as a sentinel for colliding ribosomes: activated following ribosome stalling and promotes recruitment of RNF14, which directly ubiquitinates EEF1A1/eEF1A, leading to its degradation. In addition to EEF1A1/eEF1A, the RNF14-RNF25 translation quality control pathway mediates degradation of ETF1/eRF1 and ubiquitination of ribosomal protein. GCN1 also acts as a positive activator of the integrated stress response (ISR) by mediating activation of EIF2AK4/GCN2 in response to amino acid starvation. Interaction with EIF2AK4/GCN2 on translating ribosomes stimulates EIF2AK4/GCN2 kinase activity, leading to phosphorylation of eukaryotic translation initiation factor 2 (eIF-2-alpha/EIF2S1). EIF2S1/eIF-2-alpha phosphorylation converts EIF2S1/eIF-2-alpha into a global protein synthesis inhibitor, leading to a global attenuation of cap-dependent translation, and thus to a reduced overall utilization of amino acids, while concomitantly initiating the preferential translation of ISR-specific mRNAs, such as the transcriptional activator ATF4, and hence allowing ATF4-mediated reprogramming of amino acid biosynthetic gene expression to alleviate nutrient depletion. The sequence is that of Stalled ribosome sensor GCN1 from Mus musculus (Mouse).